Consider the following 251-residue polypeptide: SNAP25 homologous protein SNAP29 (251 aa).

The segment at 1–52 is disordered; the sequence is MAPKNSSWNPFDDEKEAAKSFSLNPFDDDDDDKEVEKRFTSSLKPSGGKENQ. The segment covering 40–52 has biased composition (polar residues); sequence TSSLKPSGGKENQ. In terms of domain architecture, t-SNARE coiled-coil homology spans 186-248; sequence KTQIAKQDEA…KQSNQRARYL (63 aa).

It belongs to the SNAP-25 family.

It localises to the membrane. It is found in the cytoplasm. SNAREs, soluble N-ethylmaleimide-sensitive factor-attachment protein receptors, are essential proteins for fusion of cellular membranes. SNAREs localized on opposing membranes assemble to form a trans-SNARE complex, an extended, parallel four alpha-helical bundle that drives membrane fusion. This is SNAP25 homologous protein SNAP29 (SNAP29) from Arabidopsis thaliana (Mouse-ear cress).